Reading from the N-terminus, the 93-residue chain is MSRSIKKGPFVHAGLLKKIEEMNQNGDKKVIKTWSRSSTIFPQMIGHTIAVHDGRKHIPVYVTEDMVGHKLGEFVLTRTFKGHIKNEKTSKRK.

Belongs to the universal ribosomal protein uS19 family.

Its function is as follows. Protein S19 forms a complex with S13 that binds strongly to the 16S ribosomal RNA. The sequence is that of Small ribosomal subunit protein uS19 from Clostridium perfringens (strain ATCC 13124 / DSM 756 / JCM 1290 / NCIMB 6125 / NCTC 8237 / Type A).